Here is a 104-residue protein sequence, read N- to C-terminus: Large ribosomal subunit protein bL21c (104 aa).

The protein belongs to the bacterial ribosomal protein bL21 family. As to quaternary structure, part of the 50S ribosomal subunit.

It is found in the plastid. The protein localises to the chloroplast. Its function is as follows. This protein binds to 23S rRNA. This is Large ribosomal subunit protein bL21c from Porphyra purpurea (Red seaweed).